The following is a 724-amino-acid chain: Hyaluronan mediated motility receptor (724 aa).

Disordered stretches follow at residues 1-22 and 40-81; these read MSFPKAPLKRFNDPSGCAPSPG and KSQR…QKND. Residue Ser20 is modified to Phosphoserine. Basic and acidic residues-rich tracts occupy residues 46–60 and 70–81; these read QQKESKQNLNVDKDT and KSSESKESQKND. Asn133, Asn477, Asn567, and Asn588 each carry an N-linked (GlcNAc...) asparagine glycan. The required for interaction with FAM83D stretch occupies residues 365–546; it reads EEMVKEKNLF…ITDLQNQLKQ (182 aa). Hyaluronic acid-binding regions lie at residues 635–645 and 657–666; these read KQKIKHVVKLK and KLRCQLAKKK. Thr703 carries the phosphothreonine modification.

In terms of assembly, interacts with ANKRD26. Interacts with DYNLL1. Interacts with FAM83D/CHICA. Expressed in testis. Expressed in the breast.

The protein resides in the cell surface. The protein localises to the cytoplasm. It is found in the cytoskeleton. It localises to the spindle. Functionally, receptor for hyaluronic acid (HA). Involved in cell motility. When hyaluronan binds to HMMR, the phosphorylation of a number of proteins, including PTK2/FAK1 occurs. May also be involved in cellular transformation and metastasis formation, and in regulating extracellular-regulated kinase (ERK) activity. May act as a regulator of adipogenisis. The sequence is that of Hyaluronan mediated motility receptor (HMMR) from Homo sapiens (Human).